The chain runs to 100 residues: Small ribosomal subunit protein uS14c (100 aa).

Belongs to the universal ribosomal protein uS14 family. As to quaternary structure, part of the 30S ribosomal subunit.

It localises to the plastid. It is found in the chloroplast. Its function is as follows. Binds 16S rRNA, required for the assembly of 30S particles. The sequence is that of Small ribosomal subunit protein uS14c from Cryptomeria japonica (Japanese cedar).